The following is a 276-amino-acid chain: Elongation factor Ts, mitochondrial (276 aa).

This sequence belongs to the EF-Ts family.

The protein resides in the mitochondrion. In terms of biological role, associates with the EF-Tu.GDP complex and induces the exchange of GDP to GTP. It remains bound to the aminoacyl-tRNA.EF-Tu.GTP complex up to the GTP hydrolysis stage on the ribosome. This chain is Elongation factor Ts, mitochondrial, found in Leishmania major.